Consider the following 854-residue polypeptide: DNA mismatch repair protein MutS (854 aa).

The tract at residues 1-21 (MTASDIQPTEPHTPPTPHADT) is disordered. An ATP-binding site is contributed by 658 to 665 (GPNASGKS).

This sequence belongs to the DNA mismatch repair MutS family.

In terms of biological role, this protein is involved in the repair of mismatches in DNA. It is possible that it carries out the mismatch recognition step. This protein has a weak ATPase activity. The protein is DNA mismatch repair protein MutS of Trichormus variabilis (strain ATCC 29413 / PCC 7937) (Anabaena variabilis).